Consider the following 993-residue polypeptide: MRSSAPMPRMSRRGRVTIGVLVGVFVLFTLLGWGVQAWTDWLWFGKVDYTEVFSGVLVTRLLLFVTVGLAMAVVVGGNLWLAHRLRPRLRPQSPEQATLERYRMLLSPRLGTWFAVVSVVVGLFAGLSAQSRWSQWLLFRNGGDFGVKDPEFGIDIGFYVFDLPFWRYLLGVAFTAVVLALIGALAVHYVFGGVRLQGVGDRMSNAARAHLSALVAVFVLLKAVAYVLDRRTMLLEYNDGANVYGAGYADINALLPAKEILAYISVVVAIAVLVFSNAWMRNLVWPGISLALLGVSAVAIGGIYPWAVQTFEVKPSARDKEARYIERSIEATRAAFNLGGVETRRYAASNLQPPASLATDTAVVPNARLLDPQLVSETYTQLQQVRGFYDFGPKLDIDRYAVEGKTQDYVVGVREINYGELTAQQSNWINRHTVYTHGYGLVAAPANRVVCGGQPYFVSGFLGDRSQEGCAAPTDQIPASQPRIYYGERMEAGDYAIVGKSNPDANPAEFDRPVGEGDDGAESYYTYTGSGGVEIGSFSRRLLYAIKEQESNFLLSEAVNENSKLLYVRNPRERVEKVAPFLTVDGDPYPAVIDGRVTWIIDGYTTAATYPYAERINLQTETTDELTNRGTFQQARENINYIRNSVKATVDAYDGTVTLYEFDDGDPVLRAWNKAFGGDLIKSKTEIPAELSAHFRYPADLFKVQRNVLTRFHVTSPGDFYSGQDFWQVPNVPDAPDSGQKQPPYYLFTQFPGQEEARFQLTAAVTPNRRQNLAALMSGSYVDGKPQLEVLELPEDTRISGPVQVHQQMTNNAQIRQQLNLLSSNQAQVQYGNLLSLPFGDGMLYVEPVYVKSNQQQAYPLLQKVLLSYGDGGSFVVLADNLADGIKQLVEQGEKAGAPSTPPPSGETPAPTPTPTPTPSSPSVTPPPVTGELADAAQRVQAAIVELRAAQESGDFERYGRALKALDEATAAFEQAAGPGSAATPTGSPSPGG.

7 consecutive transmembrane segments (helical) span residues 18-38 (IGVL…VQAW), 61-81 (LLLF…NLWL), 110-130 (LGTW…LSAQ), 171-191 (GVAF…HYVF), 209-229 (AHLS…YVLD), 260-280 (ILAY…NAWM), and 283-303 (LVWP…IGGI). Disordered regions lie at residues 892–937 (QGEK…ADAA) and 974–993 (EQAA…SPGG). The span at 900-929 (STPPPSGETPAPTPTPTPTPSSPSVTPPPV) shows a compositional bias: pro residues. The segment covering 976-993 (AAGPGSAATPTGSPSPGG) has biased composition (low complexity).

It belongs to the UPF0182 family.

Its subcellular location is the cell membrane. This is UPF0182 protein Sare_4110 from Salinispora arenicola (strain CNS-205).